We begin with the raw amino-acid sequence, 1203 residues long: Chromosome partition protein Smc (1203 aa).

32–39 lines the ATP pocket; sequence PNGSGKSN. Coiled coils occupy residues 167-203, 250-288, and 327-497; these read ILKY…RQLK, MMRR…SVQQ, and DVLE…LERK. The 112-residue stretch at 511–622 folds into the SMC hinge domain; that stretch reads GLLGSIAKLV…VVNYLAEALG (112 aa). Coiled-coil stretches lie at residues 657 to 689, 720 to 765, and 976 to 1030; these read EVTS…ALSE, RLGQ…NVEQ, and YDRA…RKDL.

Belongs to the SMC family. As to quaternary structure, homodimer.

It is found in the cytoplasm. Required for chromosome condensation and partitioning. The polypeptide is Chromosome partition protein Smc (Mycobacterium leprae (strain TN)).